The chain runs to 114 residues: Protein 4 (114 aa).

This chain is Protein 4 (4), found in Hordeum vulgare (Barley).